The primary structure comprises 241 residues: B-cell receptor-associated protein 29 (241 aa).

Residues methionine 1–alanine 6 are Lumenal-facing. The chain crosses the membrane as a helical span at residues alanine 7–isoleucine 27. Residues proline 28–lysine 43 lie on the Cytoplasmic side of the membrane. Residues isoleucine 44–leucine 64 form a helical membrane-spanning segment. At aspartate 65–asparagine 103 the chain is on the lumenal side. A helical membrane pass occupies residues leucine 104 to isoleucine 124. Over threonine 125–leucine 241 the chain is Cytoplasmic. The stretch at glycine 166 to leucine 233 forms a coiled coil. Positions lysine 193–leucine 223 are disordered. Over residues methionine 206–leucine 223 the composition is skewed to basic and acidic residues. A Di-lysine motif motif is present at residues lysine 238–leucine 241.

This sequence belongs to the BCAP29/BCAP31 family. Homodimer and heterodimer with BCAP31. Binds CASP8 as a complex containing BCAP31, BCAP29, BCL2 and/or BCL2L1. Interacts with VAMP3, VAMP1 and membrane IgD immunoglobulins. May interact with ACTG1 and non-muscle myosin II.

It is found in the endoplasmic reticulum membrane. Functionally, may play a role in anterograde transport of membrane proteins from the endoplasmic reticulum to the Golgi. May be involved in CASP8-mediated apoptosis. This chain is B-cell receptor-associated protein 29 (BCAP29), found in Pongo abelii (Sumatran orangutan).